Reading from the N-terminus, the 101-residue chain is Small ribosomal subunit protein eS24 (101 aa).

This sequence belongs to the eukaryotic ribosomal protein eS24 family.

The chain is Small ribosomal subunit protein eS24 from Methanosarcina acetivorans (strain ATCC 35395 / DSM 2834 / JCM 12185 / C2A).